Here is a 376-residue protein sequence, read N- to C-terminus: Ribonucleoside-diphosphate reductase subunit beta (376 aa).

Residues Asp-85, Glu-116, and His-119 each contribute to the Fe cation site. Tyr-123 is a catalytic residue. Fe cation-binding residues include Glu-205, Glu-239, and His-242.

The protein belongs to the ribonucleoside diphosphate reductase small chain family. In terms of assembly, tetramer of two alpha and two beta subunits. Requires Fe cation as cofactor.

It carries out the reaction a 2'-deoxyribonucleoside 5'-diphosphate + [thioredoxin]-disulfide + H2O = a ribonucleoside 5'-diphosphate + [thioredoxin]-dithiol. Provides the precursors necessary for DNA synthesis. Catalyzes the biosynthesis of deoxyribonucleotides from the corresponding ribonucleotides. This Buchnera aphidicola subsp. Schizaphis graminum (strain Sg) protein is Ribonucleoside-diphosphate reductase subunit beta (nrdB).